The sequence spans 428 residues: Dihydroorotase (428 aa).

Zn(2+)-binding residues include histidine 56 and histidine 58. Substrate is bound by residues 58 to 60 (HLR) and asparagine 90. Zn(2+)-binding residues include aspartate 150, histidine 177, and histidine 230. Asparagine 276 is a substrate binding site. Residue aspartate 303 coordinates Zn(2+). Residue aspartate 303 is part of the active site. Histidine 307 contributes to the substrate binding site.

It belongs to the metallo-dependent hydrolases superfamily. DHOase family. Class I DHOase subfamily. It depends on Zn(2+) as a cofactor.

The catalysed reaction is (S)-dihydroorotate + H2O = N-carbamoyl-L-aspartate + H(+). It functions in the pathway pyrimidine metabolism; UMP biosynthesis via de novo pathway; (S)-dihydroorotate from bicarbonate: step 3/3. Functionally, catalyzes the reversible cyclization of carbamoyl aspartate to dihydroorotate. This is Dihydroorotase from Streptomyces coelicolor (strain ATCC BAA-471 / A3(2) / M145).